The primary structure comprises 58 residues: uncharacterized protein (58 aa).

The stretch at 3 to 52 (KVILEHLQRIEKQLEILNSKIENFLGFEELSEEELKELDEIEAKMEKGEK) forms a coiled coil.

This is an uncharacterized protein from Archaeoglobus fulgidus (strain ATCC 49558 / DSM 4304 / JCM 9628 / NBRC 100126 / VC-16).